A 213-amino-acid chain; its full sequence is Redox-sensing transcriptional repressor Rex (213 aa).

The H-T-H motif DNA-binding region spans 18-57; that stretch reads LYYRFVNTLKSKGIDRVNSKAISEGLNIDSATIRRDFSYF. Residue 92–97 coordinates NAD(+); the sequence is GVGNLG.

It belongs to the transcriptional regulatory Rex family. As to quaternary structure, homodimer.

The protein localises to the cytoplasm. Modulates transcription in response to changes in cellular NADH/NAD(+) redox state. The protein is Redox-sensing transcriptional repressor Rex of Staphylococcus saprophyticus subsp. saprophyticus (strain ATCC 15305 / DSM 20229 / NCIMB 8711 / NCTC 7292 / S-41).